Reading from the N-terminus, the 200-residue chain is Interleukin 17-like protein (200 aa).

The first 26 residues, 1 to 26, serve as a signal peptide directing secretion; sequence MGNFFLFAMTLVVCSVIVLLTGVADS. Residue Asn46 is glycosylated (N-linked (GlcNAc...) asparagine). 2 disulfide bridges follow: Cys122/Cys175 and Cys127/Cys177. Asn192 is a glycosylation site (N-linked (GlcNAc...) asparagine).

It belongs to the IL-17 family. As to expression, expressed in several tissues including hemocytes, gills, mantle, adductor muscle, labial palps, digestive glands and heart with highest levels in gills and lowest levels in adductor muscle and heart.

Its subcellular location is the secreted. The protein is Interleukin 17-like protein of Magallana gigas (Pacific oyster).